Consider the following 314-residue polypeptide: tRNA pseudouridine synthase B (314 aa).

Aspartate 47 acts as the Nucleophile in catalysis.

Belongs to the pseudouridine synthase TruB family. Type 1 subfamily.

It carries out the reaction uridine(55) in tRNA = pseudouridine(55) in tRNA. In terms of biological role, responsible for synthesis of pseudouridine from uracil-55 in the psi GC loop of transfer RNAs. This Vibrio campbellii (strain ATCC BAA-1116) protein is tRNA pseudouridine synthase B.